Consider the following 1229-residue polypeptide: Alpha,alpha-trehalose-phosphate synthase [UDP-forming] 2 (1229 aa).

The tract at residues 196–233 (VSSDSEGEEAIHNVRSGTHTESESEEDPKAPRSGLATS) is disordered. Residues 213 to 225 (THTESESEEDPKA) show a composition bias toward basic and acidic residues.

It in the N-terminal section; belongs to the glycosyltransferase 20 family. In the C-terminal section; belongs to the gob-1 trehalose phosphatase family.

It carries out the reaction D-glucose 6-phosphate + UDP-alpha-D-glucose = alpha,alpha-trehalose 6-phosphate + UDP + H(+). In terms of biological role, catalyzes the production of trehalose from glucose-6-phosphate and UDP-alpha-D-glucose in a 2 step process. The sequence is that of Alpha,alpha-trehalose-phosphate synthase [UDP-forming] 2 (tps-2) from Caenorhabditis elegans.